Here is a 110-residue protein sequence, read N- to C-terminus: Mite allergen Lep d 5 (110 aa).

It belongs to the mite group 5 allergen family.

The polypeptide is Mite allergen Lep d 5 (Lepidoglyphus destructor (Storage mite)).